A 491-amino-acid polypeptide reads, in one-letter code: Cobyric acid synthase (491 aa).

One can recognise a GATase cobBQ-type domain in the interval 249–439; sequence PIDIAVIKLP…IHGVFDGVEF (191 aa). Cysteine 329 acts as the Nucleophile in catalysis. Histidine 431 is a catalytic residue.

The protein belongs to the CobB/CobQ family. CobQ subfamily.

It functions in the pathway cofactor biosynthesis; adenosylcobalamin biosynthesis. Functionally, catalyzes amidations at positions B, D, E, and G on adenosylcobyrinic A,C-diamide. NH(2) groups are provided by glutamine, and one molecule of ATP is hydrogenolyzed for each amidation. The polypeptide is Cobyric acid synthase (Clostridium tetani (strain Massachusetts / E88)).